The chain runs to 2300 residues: Protein Ycf2 (2300 aa).

Residue 1642 to 1649 participates in ATP binding; sequence GSIGTGRS.

This sequence belongs to the Ycf2 family.

Its subcellular location is the plastid. The protein resides in the chloroplast stroma. Its function is as follows. Probable ATPase of unknown function. Its presence in a non-photosynthetic plant (Epifagus virginiana) and experiments in tobacco indicate that it has an essential function which is probably not related to photosynthesis. The polypeptide is Protein Ycf2 (Vitis vinifera (Grape)).